Consider the following 95-residue polypeptide: UPF0045 protein CPE1503 (95 aa).

This sequence belongs to the UPF0045 family.

In Clostridium perfringens (strain 13 / Type A), this protein is UPF0045 protein CPE1503.